A 274-amino-acid polypeptide reads, in one-letter code: Aquaporin C (274 aa).

Residues 1–33 lie on the Cytoplasmic side of the membrane; the sequence is MPFLHLFTPYTNADNTKLILRVNESRLRLFTRQ. The chain crosses the membrane as a helical span at residues 34–54; the sequence is LLAEFFGTLFVVYIVSGSTLA. Topologically, residues 55–66 are extracellular; sequence ANFAVSDPIVRV. The chain crosses the membrane as a helical span at residues 67-87; the sequence is CLICLVQGFAFAAIIWSISGI. The Cytoplasmic segment spans residues 88–105; that stretch reads SGCQLNPAVTVGCVTTGR. Residues 93 to 95 carry the NPA 1 motif; the sequence is NPA. The helical transmembrane segment at 106–126 threads the bilayer; the sequence is MGILNGIAFIIFQCVGALVGA. The Extracellular portion of the chain corresponds to 127–154; it reads GMMKASLPTFYERDLSATTLATGVNVAR. Residues 155–175 traverse the membrane as a helical segment; sequence GFFLEMVTTSFLVFVVLGVAV. The Cytoplasmic segment spans residues 176 to 185; that stretch reads YNEWDPKISR. A helical transmembrane segment spans residues 186-206; that stretch reads VAPLAIGCAVIAGVGFLNLFT. Residues 207 to 229 lie on the Extracellular side of the membrane; it reads GGSLNPARSFGPAVFSDTWHRHY. An NPA 2 motif is present at residues 211–213; the sequence is NPA. A helical transmembrane segment spans residues 230–250; the sequence is IYWFGPICGGIIAGLFWRIFL. Over 251-274 the chain is Cytoplasmic; it reads SEKVLLIDRPYTDFHRSTYGTATK.

This sequence belongs to the MIP/aquaporin (TC 1.A.8) family.

The protein resides in the cell membrane. In terms of biological role, may form a water-specific channel. This is Aquaporin C (wacA) from Dictyostelium discoideum (Social amoeba).